A 41-amino-acid polypeptide reads, in one-letter code: Cytochrome b559 subunit beta (41 aa).

The chain crosses the membrane as a helical span at residues 16-32 (WLAVHALAVPTVFFLGS). A heme-binding site is contributed by histidine 20.

This sequence belongs to the PsbE/PsbF family. As to quaternary structure, heterodimer of an alpha subunit and a beta subunit. PSII is composed of 1 copy each of membrane proteins PsbA, PsbB, PsbC, PsbD, PsbE, PsbF, PsbH, PsbI, PsbJ, PsbK, PsbL, PsbM, PsbT, PsbX, PsbY, PsbZ, Psb30/Ycf12, at least 3 peripheral proteins of the oxygen-evolving complex and a large number of cofactors. It forms dimeric complexes. Heme b serves as cofactor.

Its subcellular location is the plastid. It is found in the chloroplast thylakoid membrane. This b-type cytochrome is tightly associated with the reaction center of photosystem II (PSII). PSII is a light-driven water:plastoquinone oxidoreductase that uses light energy to abstract electrons from H(2)O, generating O(2) and a proton gradient subsequently used for ATP formation. It consists of a core antenna complex that captures photons, and an electron transfer chain that converts photonic excitation into a charge separation. This is Cytochrome b559 subunit beta from Nephroselmis olivacea (Green alga).